We begin with the raw amino-acid sequence, 476 residues long: Cytochrome P450 monooxygenase ppzE (476 aa).

A heme-binding site is contributed by Cys452.

This sequence belongs to the cytochrome P450 family. Heme is required as a cofactor.

It participates in secondary metabolite biosynthesis. Functionally, cytochrome P450 monooxygenase; part of the gene cluster that mediates the biosynthesis of pyrrolopyrazines, secondary metabolites showing insecticidal activity. The role of ppzE within the pathway has still to be determined. The single multifunctional NRPS ppzA is sufficient to produce peramine via condensation of 1-pyrroline-5-carboxylate and arginine, N-methylation of the alpha-amino group of arginine and reduction of the thioester and the cyclization to form an iminium ion resulting in release from the peptide synthetase. Deprotonation of this intermediate and oxidation of the pyrroline ring would give rise to peramine. In Epichloe species that produce only peramine, the peramine synthetase gene is not localized in a gene cluster, in contrast to Metarhizium species that contain additional pyrrolopyrazine biosynthesis genes. The 2-oxoglutarate-Fe(II) type oxidoreductase ppzC hydroxylates peramine to yield the newly identified compound 8-hydroxyperamine whereas ppzD converts L-proline into trans-4-hydroxy-L-proline, a precursor of peramine biosynthesis. The polypeptide is Cytochrome P450 monooxygenase ppzE (Metarhizium majus (strain ARSEF 297)).